The sequence spans 802 residues: Lon protease (802 aa).

The Lon N-terminal domain occupies 17–209; that stretch reads LPILPLNNVV…QVLSFLERER (193 aa). 363–370 is an ATP binding site; it reads GPPGVGKT. In terms of domain architecture, Lon proteolytic spans 599 to 780; the sequence is EDEVGVVTGL…DEVLPRVLHP (182 aa). Catalysis depends on residues S686 and K729.

It belongs to the peptidase S16 family. In terms of assembly, homohexamer. Organized in a ring with a central cavity.

The protein localises to the cytoplasm. The catalysed reaction is Hydrolysis of proteins in presence of ATP.. Functionally, ATP-dependent serine protease that mediates the selective degradation of mutant and abnormal proteins as well as certain short-lived regulatory proteins. Required for cellular homeostasis and for survival from DNA damage and developmental changes induced by stress. Degrades polypeptides processively to yield small peptide fragments that are 5 to 10 amino acids long. Binds to DNA in a double-stranded, site-specific manner. This chain is Lon protease, found in Roseiflexus castenholzii (strain DSM 13941 / HLO8).